Here is a 178-residue protein sequence, read N- to C-terminus: PSTTSSKSPKRRAKSPRRKRTGPTVSDLILMAMSASSDRGGLSLAALKKDLKGRGYDVVRNKGRVLMAIKRLVANKSVVKAKGFYKLNKNPPTPRRRVAKRKKPKAKRAKRGRKRKAAPKKKSAKKKRKRRRRKSKSPKKARKARRAKSPRRARSPRRSKSPRKAKRRTTKTRRRAKK.

2 disordered regions span residues 1 to 27 (PSTTSSKSPKRRAKSPRRKRTGPTVSD) and 77 to 178 (SVVK…RAKK). Composition is skewed to basic residues over residues 8-21 (SPKRRAKSPRRKRT) and 94-178 (PRRR…RAKK). The 69-residue stretch at 21 to 89 (TGPTVSDLIL…KAKGFYKLNK (69 aa)) folds into the H15 domain.

Male germ cells.

The protein resides in the nucleus. It is found in the chromosome. In terms of biological role, replaces histones in the chromatin of sperm during the haploid phase of spermatogenesis. Compacts sperm DNA into a highly condensed, stable and inactive complex. This Mullus surmuletus (Striped red mullet) protein is Protamine-like protein.